The sequence spans 66 residues: Cytoplasmic envelopment protein 3 (66 aa).

Gly-2 carries N-myristoyl glycine; by host lipidation.

It belongs to the herpesviridae cytoplasmic envelopment protein 3 family. In terms of assembly, interacts with cytoplasmic envelopment protein 2; this interaction is essential for the proper localization of each protein to the assembly complex and thus for the production of infectious virus. Post-translationally, phosphorylated. Phosphorylation does not seem to be required for recycling to the host Golgi apparatus. Packaging is selective for underphosphorylated forms.

It is found in the virion tegument. It localises to the virion membrane. Its subcellular location is the host cell membrane. The protein localises to the host Golgi apparatus membrane. Functionally, plays an important role in the cytoplasmic envelopment of tegument proteins and capsids during the assembly and egress processes. Also participates in viral entry at the fusion step probably by regulating the core fusion machinery. This Saimiriine herpesvirus 2 (strain 11) (SaHV-2) protein is Cytoplasmic envelopment protein 3 (38).